The chain runs to 501 residues: Bifunctional purine biosynthesis protein PurH (501 aa).

Residues 1-144 (MKKRALISVF…KNFKDVVVLS (144 aa)) enclose the MGS-like domain.

This sequence belongs to the PurH family.

The enzyme catalyses (6R)-10-formyltetrahydrofolate + 5-amino-1-(5-phospho-beta-D-ribosyl)imidazole-4-carboxamide = 5-formamido-1-(5-phospho-D-ribosyl)imidazole-4-carboxamide + (6S)-5,6,7,8-tetrahydrofolate. It carries out the reaction IMP + H2O = 5-formamido-1-(5-phospho-D-ribosyl)imidazole-4-carboxamide. Its pathway is purine metabolism; IMP biosynthesis via de novo pathway; 5-formamido-1-(5-phospho-D-ribosyl)imidazole-4-carboxamide from 5-amino-1-(5-phospho-D-ribosyl)imidazole-4-carboxamide (10-formyl THF route): step 1/1. It functions in the pathway purine metabolism; IMP biosynthesis via de novo pathway; IMP from 5-formamido-1-(5-phospho-D-ribosyl)imidazole-4-carboxamide: step 1/1. This Clostridium perfringens (strain SM101 / Type A) protein is Bifunctional purine biosynthesis protein PurH.